The chain runs to 267 residues: 4-diphosphocytidyl-2-C-methyl-D-erythritol kinase (267 aa).

Lysine 8 is a catalytic residue. Position 90–100 (90–100) interacts with ATP; that stretch reads PIGAGLGGGSS. Aspartate 132 is a catalytic residue.

It belongs to the GHMP kinase family. IspE subfamily.

The enzyme catalyses 4-CDP-2-C-methyl-D-erythritol + ATP = 4-CDP-2-C-methyl-D-erythritol 2-phosphate + ADP + H(+). It participates in isoprenoid biosynthesis; isopentenyl diphosphate biosynthesis via DXP pathway; isopentenyl diphosphate from 1-deoxy-D-xylulose 5-phosphate: step 3/6. In terms of biological role, catalyzes the phosphorylation of the position 2 hydroxy group of 4-diphosphocytidyl-2C-methyl-D-erythritol. The protein is 4-diphosphocytidyl-2-C-methyl-D-erythritol kinase of Azobacteroides pseudotrichonymphae genomovar. CFP2.